A 556-amino-acid chain; its full sequence is Formate--tetrahydrofolate ligase (556 aa).

65 to 72 (TPAGEGKT) lines the ATP pocket.

This sequence belongs to the formate--tetrahydrofolate ligase family.

The enzyme catalyses (6S)-5,6,7,8-tetrahydrofolate + formate + ATP = (6R)-10-formyltetrahydrofolate + ADP + phosphate. It functions in the pathway one-carbon metabolism; tetrahydrofolate interconversion. This Clostridium cylindrosporum protein is Formate--tetrahydrofolate ligase.